The following is a 187-amino-acid chain: HTH-type transcriptional regulator NfxB (187 aa).

A DNA-binding region (H-T-H motif) is located at residues 26–45 (LKELAEAAGVSKATLHRFCG).

Confers resistance to guinolones. May negatively regulate the expression of genes that are associated with cell permeability to drugs. In Pseudomonas aeruginosa (strain ATCC 15692 / DSM 22644 / CIP 104116 / JCM 14847 / LMG 12228 / 1C / PRS 101 / PAO1), this protein is HTH-type transcriptional regulator NfxB (nfxB).